Consider the following 465-residue polypeptide: Argininosuccinate lyase (465 aa).

This sequence belongs to the lyase 1 family. Argininosuccinate lyase subfamily.

The protein resides in the cytoplasm. It catalyses the reaction 2-(N(omega)-L-arginino)succinate = fumarate + L-arginine. It participates in amino-acid biosynthesis; L-arginine biosynthesis; L-arginine from L-ornithine and carbamoyl phosphate: step 3/3. In Nitrobacter winogradskyi (strain ATCC 25391 / DSM 10237 / CIP 104748 / NCIMB 11846 / Nb-255), this protein is Argininosuccinate lyase.